The primary structure comprises 1242 residues: DNA polymerase catalytic subunit (1242 aa).

Disordered stretches follow at residues 14 to 38 (GAVAGGRRQRSQPGSAQGSGKRPPQ), 644 to 665 (LQSAPSSQDGVSPGSGSNSSSS), and 1109 to 1162 (APQG…RKPP). Residues 653–665 (GVSPGSGSNSSSS) show a composition bias toward low complexity. Positions 1111 to 1125 (QGSSDNGDSVTTGVV) are enriched in polar residues. Residues 1145–1155 (ESNRRGGEPAK) show a composition bias toward basic and acidic residues.

Belongs to the DNA polymerase type-B family. Forms a complex with the ssDNA-binding protein UL57, the DNA polymerase processivity factor UL44, and the alkaline exonuclease UL98. Interacts with the putative helicase-primase complex composed of UL70, UL102 and UL105 proteins; these interactions may coordinate leading and lagging strand DNA synthesis at the replication fork.

It is found in the host nucleus. It carries out the reaction DNA(n) + a 2'-deoxyribonucleoside 5'-triphosphate = DNA(n+1) + diphosphate. Functionally, replicates viral genomic DNA in the late phase of lytic infection, producing long concatemeric DNA. The replication complex is composed of six viral proteins: the DNA polymerase, processivity factor, primase, primase-associated factor, helicase, and ssDNA-binding protein. The chain is DNA polymerase catalytic subunit (UL54) from Homo sapiens (Human).